Reading from the N-terminus, the 249-residue chain is Ribosomal RNA small subunit methyltransferase G (249 aa).

Residues G86, F91, and R178 each coordinate S-adenosyl-L-methionine.

Belongs to the methyltransferase superfamily. RNA methyltransferase RsmG family.

Its subcellular location is the cytoplasm. In terms of biological role, specifically methylates the N7 position of a guanine in 16S rRNA. The sequence is that of Ribosomal RNA small subunit methyltransferase G from Bifidobacterium adolescentis (strain ATCC 15703 / DSM 20083 / NCTC 11814 / E194a).